A 267-amino-acid polypeptide reads, in one-letter code: Heme-containing CO-sensing transcriptional regulator RcoM 1 (267 aa).

The 72-residue stretch at 15-86 (RAETFQHKLE…KSRDKLRFLL (72 aa)) folds into the PAS domain. Residues His74 and Met104 each contribute to the heme site. One can recognise an HTH LytTR-type domain in the interval 161-266 (IPVYRKNRVI…TAQLKELLGV (106 aa)).

It depends on heme as a cofactor.

It is found in the cytoplasm. Functionally, one-component, b-type heme-containing aerobic sensor and transcriptional regulator that responds to CO by activating the expression of the oxidation operon cox. The protein is Heme-containing CO-sensing transcriptional regulator RcoM 1 (rcoM1) of Paraburkholderia xenovorans (strain LB400).